The chain runs to 687 residues: DNA ligase (687 aa).

Residues 33–37 (DAEFD), 83–84 (SL), and Glu-113 contribute to the NAD(+) site. Lys-115 functions as the N6-AMP-lysine intermediate in the catalytic mechanism. NAD(+) contacts are provided by Arg-136, Glu-176, Lys-292, and Lys-316. Positions 410, 413, 429, and 435 each coordinate Zn(2+). Positions 599 to 687 (SVPRTLAGVT…GPPAEVGEPT (89 aa)) constitute a BRCT domain.

This sequence belongs to the NAD-dependent DNA ligase family. LigA subfamily. Requires Mg(2+) as cofactor. Mn(2+) is required as a cofactor.

The enzyme catalyses NAD(+) + (deoxyribonucleotide)n-3'-hydroxyl + 5'-phospho-(deoxyribonucleotide)m = (deoxyribonucleotide)n+m + AMP + beta-nicotinamide D-nucleotide.. Functionally, DNA ligase that catalyzes the formation of phosphodiester linkages between 5'-phosphoryl and 3'-hydroxyl groups in double-stranded DNA using NAD as a coenzyme and as the energy source for the reaction. It is essential for DNA replication and repair of damaged DNA. This Mycobacterium marinum (strain ATCC BAA-535 / M) protein is DNA ligase.